We begin with the raw amino-acid sequence, 203 residues long: DNA-directed RNA polymerase III subunit rpc8 (203 aa).

Belongs to the eukaryotic RPB7/RPC8 RNA polymerase subunit family. Component of the RNA polymerase III (Pol III) complex consisting of 17 subunits. Rpc25/rpc8 and rpc17/rpc9 form a Pol III subcomplex.

Its subcellular location is the cytoplasm. It localises to the nucleus. In terms of biological role, DNA-dependent RNA polymerase catalyzes the transcription of DNA into RNA using the four ribonucleoside triphosphates as substrates. Specific peripheric component of RNA polymerase III which synthesizes small RNAs, such as 5S rRNA and tRNA. The sequence is that of DNA-directed RNA polymerase III subunit rpc8 (rpc25) from Schizosaccharomyces pombe (strain 972 / ATCC 24843) (Fission yeast).